The chain runs to 797 residues: Short transient receptor potential channel 4-associated protein (797 aa).

A2 carries the post-translational modification N-acetylalanine. The segment at 2–400 (AAAPVAAGSG…VLYVLCVLLM (399 aa)) is interaction with TNFRSF1A.

Component of the DCX(TRPC4AP) E3 ubiquitin ligase complex, at least composed of CUL4A, DDB1, TRPC4AP/TRUSS and RBX1. Interacts with MYC. Constitutively associated with TNFRSF1A. Directly interacts with TRADD, TRAF2, CHUK, IKBKB and IKBKG. Interacts with TRPC1, TRPC4 and TRPC5. In terms of assembly, (Microbial infection) Interacts with Hepatitis B virus (HBV) protein X; leading to prevent ubiquitination of TRPC4AP by SKP2. Phosphorylated by GSK3B; phosphorylation is required for ubiquitination. In terms of processing, ubiquitinated by a SCF (SKP1-CUL1-F-box protein) E3 ubiquitin-protein ligase containing SKP2, leading to its degradation. Phosphorylation by GSK3B is required for ubiquitination.

Its subcellular location is the cytoplasm. It is found in the perinuclear region. It participates in protein modification; protein ubiquitination. Functionally, substrate-recognition component of a DCX (DDB1-CUL4-X-box) E3 ubiquitin-protein ligase complex required for cell cycle control. The DCX(TRPC4AP) complex specifically mediates the polyubiquitination and subsequent degradation of MYC as part of the DesCEND (destruction via C-end degrons) pathway. The DesCEND (destruction via C-end degrons) pathway recognizes a C-degron located at the extreme C terminus of target proteins, leading to their ubiquitination and degradation. The DCX(TRPC4AP) complex specifically recognizes proteins with an arginine at the minus 3 position (R-3 motif) at the C-terminus, such as MYC, leading to their ubiquitination and degradation. Also participates in the activation of NFKB1 in response to ligation of TNFRSF1A, possibly by linking TNFRSF1A to the IKK signalosome. Involved in JNK activation via its interaction with TRAF2. Also involved in elevation of endoplasmic reticulum Ca(2+) storage reduction in response to CHRM1. This chain is Short transient receptor potential channel 4-associated protein, found in Homo sapiens (Human).